A 752-amino-acid chain; its full sequence is Protein WEAK CHLOROPLAST MOVEMENT UNDER BLUE LIGHT-like 2 (752 aa).

Serine 143 carries the post-translational modification Phosphoserine. 2 coiled-coil regions span residues 186 to 557 (ERRK…SRAS) and 596 to 651 (ELSK…KEAM). Residues 476 to 495 (KHDLSETRQRNREDTREEKC) form a disordered region. Residues 653–675 (KVEKARDGKVGMDHELRKWRSDN) are compositionally biased toward basic and acidic residues. The interval 653 to 733 (KVEKARDGKV…ETETKKKKKR (81 aa)) is disordered. Polar residues predominate over residues 690 to 723 (KSKSALHQPTTFTFGEQASSSNVTPQASSSNVTP).

Belongs to the WEB family.

This Arabidopsis thaliana (Mouse-ear cress) protein is Protein WEAK CHLOROPLAST MOVEMENT UNDER BLUE LIGHT-like 2 (WEL2).